We begin with the raw amino-acid sequence, 164 residues long: uncharacterized protein (164 aa).

This is an uncharacterized protein from Saccharomyces cerevisiae (strain ATCC 204508 / S288c) (Baker's yeast).